The primary structure comprises 183 residues: Ribulose bisphosphate carboxylase small subunit, chloroplastic 3 (183 aa).

The N-terminal 57 residues, 1–57 (MASSLMSNAATTMAAATTTAQANMVAPFNGLKSVSAFPVTRKNNDITSVASNGGRVQ), are a transit peptide targeting the chloroplast.

Belongs to the RuBisCO small chain family. As to quaternary structure, heterohexadecamer of 8 large and 8 small subunits.

The protein localises to the plastid. The protein resides in the chloroplast. Functionally, ruBisCO catalyzes two reactions: the carboxylation of D-ribulose 1,5-bisphosphate, the primary event in carbon dioxide fixation, as well as the oxidative fragmentation of the pentose substrate. Both reactions occur simultaneously and in competition at the same active site. Although the small subunit is not catalytic it is essential for maximal activity. The protein is Ribulose bisphosphate carboxylase small subunit, chloroplastic 3 of Mesembryanthemum crystallinum (Common ice plant).